A 271-amino-acid polypeptide reads, in one-letter code: 4-hydroxy-tetrahydrodipicolinate reductase (271 aa).

NAD(+) is bound by residues 10-15 (GAGGRM), E36, 100-102 (GTT), and 124-127 (SGNM). H157 (proton donor/acceptor) is an active-site residue. (S)-2,3,4,5-tetrahydrodipicolinate is bound at residue H158. K161 (proton donor) is an active-site residue. Residue 167–168 (GT) coordinates (S)-2,3,4,5-tetrahydrodipicolinate.

Belongs to the DapB family.

The protein localises to the cytoplasm. It catalyses the reaction (S)-2,3,4,5-tetrahydrodipicolinate + NAD(+) + H2O = (2S,4S)-4-hydroxy-2,3,4,5-tetrahydrodipicolinate + NADH + H(+). The enzyme catalyses (S)-2,3,4,5-tetrahydrodipicolinate + NADP(+) + H2O = (2S,4S)-4-hydroxy-2,3,4,5-tetrahydrodipicolinate + NADPH + H(+). It functions in the pathway amino-acid biosynthesis; L-lysine biosynthesis via DAP pathway; (S)-tetrahydrodipicolinate from L-aspartate: step 4/4. Catalyzes the conversion of 4-hydroxy-tetrahydrodipicolinate (HTPA) to tetrahydrodipicolinate. This chain is 4-hydroxy-tetrahydrodipicolinate reductase, found in Rhodopseudomonas palustris (strain BisB5).